A 473-amino-acid polypeptide reads, in one-letter code: Rifampicin monooxygenase (473 aa).

Residues T12, E31, K32, and R41 each coordinate FAD. R43 serves as a coordination point for rifampicin. FAD contacts are provided by Q98, V122, and T156. R196 provides a ligand contact to rifampicin. D276 provides a ligand contact to FAD. G285 is a rifampicin binding site. Positions 289 and 290 each coordinate FAD.

Belongs to the rifampicin monooxygenase family. In terms of assembly, homodimer. The cofactor is FAD.

It carries out the reaction rifampicin + NADPH + O2 = rifampicin para-naphthoquinone carboxamide + NADP(+) + H2O + H(+). It catalyses the reaction rifampicin + NADH + O2 = rifampicin para-naphthoquinone carboxamide + NAD(+) + H2O + H(+). Its function is as follows. Monooxygenase that can modify rifampicin, thereby inactivating its antibiotic activity. It constitutes a secondary rifampicin resistance factor. The protein is Rifampicin monooxygenase of Nocardia farcinica (strain IFM 10152).